Reading from the N-terminus, the 359-residue chain is Alanine racemase, biosynthetic (359 aa).

The active-site Proton acceptor; specific for D-alanine is Lys-34. An N6-(pyridoxal phosphate)lysine modification is found at Lys-34. Arg-129 is a substrate binding site. Tyr-255 functions as the Proton acceptor; specific for L-alanine in the catalytic mechanism. Residue Met-303 participates in substrate binding.

This sequence belongs to the alanine racemase family. Requires pyridoxal 5'-phosphate as cofactor.

The enzyme catalyses L-alanine = D-alanine. It participates in amino-acid biosynthesis; D-alanine biosynthesis; D-alanine from L-alanine: step 1/1. It functions in the pathway cell wall biogenesis; peptidoglycan biosynthesis. In terms of biological role, catalyzes the interconversion of L-alanine and D-alanine. Provides the D-alanine required for cell wall biosynthesis. This is Alanine racemase, biosynthetic (alr) from Escherichia coli O6:H1 (strain CFT073 / ATCC 700928 / UPEC).